Consider the following 225-residue polypeptide: Iron-sulfur flavoprotein CD630_04720 (225 aa).

Positions 49, 52, 55, and 61 each coordinate [4Fe-4S] cluster.

Belongs to the SsuE family. Isf subfamily. Homodimer. Requires FMN as cofactor. [4Fe-4S] cluster serves as cofactor.

In terms of biological role, redox-active protein probably involved in electron transport. The protein is Iron-sulfur flavoprotein CD630_04720 of Clostridioides difficile (strain 630) (Peptoclostridium difficile).